The following is a 496-amino-acid chain: L-arabinose isomerase (496 aa).

4 residues coordinate Mn(2+): Glu306, Glu331, His348, and His447.

Belongs to the arabinose isomerase family. Mn(2+) is required as a cofactor.

It catalyses the reaction beta-L-arabinopyranose = L-ribulose. Its pathway is carbohydrate degradation; L-arabinose degradation via L-ribulose; D-xylulose 5-phosphate from L-arabinose (bacterial route): step 1/3. Functionally, catalyzes the conversion of L-arabinose to L-ribulose. The polypeptide is L-arabinose isomerase (Geobacillus kaustophilus (strain HTA426)).